We begin with the raw amino-acid sequence, 507 residues long: Cytochrome P450 monooxygenase helB3 (507 aa).

Residues 1 to 25 (MAVATLISILFAVLALRLCYLLIHA) form the signal peptide. N-linked (GlcNAc...) asparagine glycans are attached at residues Asn111, Asn206, and Asn339. Cys435 contacts heme.

This sequence belongs to the cytochrome P450 family. Requires heme as cofactor.

It functions in the pathway mycotoxin biosynthesis. Functionally, cytochrome P450 monooxygenase; part of the gene cluster that mediates the biosynthesis of helvolic acid, an antibacterial nortriterpenoid. Protostadienol synthase helA cyclizes (3S)-oxidosqualene to (17Z)-protosta-17(20),24-dien-3-beta-ol (protostadienol). The synthesis of protostadienol is followed by several steps of monooxygenation, dehydrogenation, and acyl transfer to yield the final helvolic acid. Following the cyclization to the tetracyclic protostadienol by helA, cytochrome P450 monooxygenases helB1-mediated and helB2-mediated oxidation at C-4 and C-16, acyltransferase helD2-dependent acetylation of 16-OH, oxidation of C-21 by cytochrome P450 monooxygenase helB4, and short chain dehydrogenase helC-dependent oxidative decarboxylation yield the fusidane skeleton. This intermediate is further modified in three additional steps mediated by the cytochrome P450 monooxygenase helB3, the acyltransferase helD1, and the 3-ketosteroid 1-dehydrogenase helE to give helvolic acid. Compared with the late stages in the biosynthesis of helvolic acid, enzymes involved in the early stage modifications act in a relatively strict order. The hydroxylation of C-16 by helB1 and subsequent acetylation by helD2 should occur before the helB3-mediated oxidation of C-21. C-4 demethylation in fusidane-type antibiotics proceeds in an unusual manner though it is also achieved by oxidative decarboxylation. The methyl group at C-4 beta position is oxidized by helB1 and subsequently removed by the short chain dehydrogenase helC. This Aspergillus fumigatus (strain ATCC MYA-4609 / CBS 101355 / FGSC A1100 / Af293) (Neosartorya fumigata) protein is Cytochrome P450 monooxygenase helB3.